We begin with the raw amino-acid sequence, 1390 residues long: Hepatocyte growth factor receptor (1390 aa).

The N-terminal stretch at 1-24 (MKAPAVLAPGILVLLFTLVQRSNG) is a signal peptide. Residues 25–932 (ECKEALAKSE…VIVQPDQNFT (908 aa)) are Extracellular-facing. In terms of domain architecture, Sema spans 27–515 (KEALAKSEMN…TGKKITKIPL (489 aa)). N-linked (GlcNAc...) asparagine glycosylation occurs at asparagine 45. Disulfide bonds link cysteine 95–cysteine 101, cysteine 98–cysteine 160, cysteine 133–cysteine 141, and cysteine 172–cysteine 175. Asparagine 106 carries N-linked (GlcNAc...) asparagine glycosylation. Residue asparagine 149 is glycosylated (N-linked (GlcNAc...) asparagine). Residue asparagine 202 is glycosylated (N-linked (GlcNAc...) asparagine). Cystine bridges form between cysteine 298/cysteine 363 and cysteine 385/cysteine 397. Asparagine 399 and asparagine 405 each carry an N-linked (GlcNAc...) asparagine glycan. 4 cysteine pairs are disulfide-bonded: cysteine 520/cysteine 538, cysteine 526/cysteine 561, cysteine 529/cysteine 545, and cysteine 541/cysteine 551. IPT/TIG domains lie at 563–655 (PAIY…FSYV), 657–739 (PVIT…FSYR), and 742–836 (PIVY…LIYV). O-linked (Man) threonine glycosylation is present at threonine 582. An N-linked (GlcNAc...) asparagine glycan is attached at asparagine 607. A disulfide bond links cysteine 610 and cysteine 624. Asparagine 635 carries N-linked (GlcNAc...) asparagine glycosylation. A glycan (O-linked (Man) threonine) is linked at threonine 676. A disulfide bridge links cysteine 697 with cysteine 709. An O-linked (Man) threonine glycan is attached at threonine 761. Residues asparagine 785, asparagine 879, and asparagine 930 are each glycosylated (N-linked (GlcNAc...) asparagine). The helical transmembrane segment at 933 to 955 (GLIAGVVSISTALLLLLGFFLWL) threads the bilayer. At 956–1390 (KKRKQIKDLG…TRPASFWETS (435 aa)) the chain is on the cytoplasmic side. Residue serine 966 is modified to Phosphoserine. Threonine 977 bears the Phosphothreonine mark. Phosphoserine occurs at positions 990, 997, and 1000. The residue at position 1003 (tyrosine 1003) is a Phosphotyrosine. A Protein kinase domain is found at 1078 to 1345 (VHFNEVIGRG…RISAIFSTFI (268 aa)). ATP contacts are provided by residues 1084–1092 (IGRGHFGCV) and lysine 1110. Aspartate 1204 serves as the catalytic Proton acceptor. Residues 1212-1390 (LDEKFTVKVA…TRPASFWETS (179 aa)) form an interaction with RANBP9 region. The residue at position 1230 (tyrosine 1230) is a Phosphotyrosine. Phosphotyrosine; by autocatalysis is present on residues tyrosine 1234 and tyrosine 1235. Threonine 1289 carries the post-translational modification Phosphothreonine. The tract at residues 1320–1359 (WHPKAEMRPSFSELVSRISAIFSTFIGEHYVHVNATYVNV) is interaction with MUC20. Residues tyrosine 1349 and tyrosine 1356 each carry the phosphotyrosine; by autocatalysis modification. At tyrosine 1365 the chain carries Phosphotyrosine.

The protein belongs to the protein kinase superfamily. Tyr protein kinase family. As to quaternary structure, heterodimer made of an alpha chain (50 kDa) and a beta chain (145 kDa) which are disulfide linked. Binds PLXNB1. Interacts when phosphorylated with downstream effectors including STAT3, PIK3R1, SRC, PCLG1, GRB2 and GAB1. Interacts with SPSB1, SPSB2 and SPSB4. Interacts with INPP5D/SHIP1. When phosphorylated at Tyr-1356, interacts with INPPL1/SHIP2. Interacts with RANBP9 and RANBP10, as well as SPSB1, SPSB2, SPSB3 and SPSB4. SPSB1 binding occurs in the presence and in the absence of HGF, however HGF treatment has a positive effect on this interaction. Interacts with MUC20; prevents interaction with GRB2 and suppresses hepatocyte growth factor-induced cell proliferation. Interacts with GRB10. Interacts with PTPN1 and PTPN2. Interacts with LECT2; this interaction may have an antagonistic effect on receptor activation. Interacts with HSP90AA1 and HSP90AB1; the interaction suppresses MET kinase activity. Interacts with tensin TNS3. Interacts (when phosphorylated) with tensin TNS4 (via SH2 domain); the interaction increases MET protein stability by inhibiting MET endocytosis and subsequent lysosomal degradation. (Microbial infection) Interacts via extracytoplasmic residues 25-656 with L.monocytogenes InlB; MET can bind HGF, its endogenous ligand, and InlB simultaneously. InlB probably dimerizes upon binding to MET, which encourages subsequent dimerization of MET. Autophosphorylated in response to ligand binding on Tyr-1234 and Tyr-1235 in the kinase domain leading to further phosphorylation of Tyr-1349 and Tyr-1356 in the C-terminal multifunctional docking site. Dephosphorylated by PTPRJ at Tyr-1349 and Tyr-1365. Dephosphorylated by PTPN1 and PTPN2. In terms of processing, ubiquitinated. Ubiquitination by CBL regulates MET endocytosis, resulting in decreasing plasma membrane receptor abundance, and in endosomal degradation and/or recycling of internalized receptors. Post-translationally, O-mannosylation of IPT/TIG domains by TMEM260 is required for protein maturation. O-mannosylated residues are composed of single mannose glycans that are not elongated or modified. (Microbial infection) Tyrosine phosphorylation is stimulated by L.monocytogenes InlB. Tyrosine phosphorylation is maximal 10-20 minutes after treatment with InlB and disappears by 60 minutes. The phosphorylated residues were not identified. As to expression, expressed in normal hepatocytes as well as in epithelial cells lining the stomach, the small and the large intestine. Found also in basal keratinocytes of esophagus and skin. High levels are found in liver, gastrointestinal tract, thyroid and kidney. Also present in the brain. Expressed in metaphyseal bone (at protein level).

The protein localises to the membrane. It localises to the secreted. The enzyme catalyses L-tyrosyl-[protein] + ATP = O-phospho-L-tyrosyl-[protein] + ADP + H(+). With respect to regulation, in its inactive state, the C-terminal tail interacts with the catalytic domain and inhibits the kinase activity. Upon ligand binding, the C-terminal tail is displaced and becomes phosphorylated, thus increasing the kinase activity. Functionally, receptor tyrosine kinase that transduces signals from the extracellular matrix into the cytoplasm by binding to hepatocyte growth factor/HGF ligand. Regulates many physiological processes including proliferation, scattering, morphogenesis and survival. Ligand binding at the cell surface induces autophosphorylation of MET on its intracellular domain that provides docking sites for downstream signaling molecules. Following activation by ligand, interacts with the PI3-kinase subunit PIK3R1, PLCG1, SRC, GRB2, STAT3 or the adapter GAB1. Recruitment of these downstream effectors by MET leads to the activation of several signaling cascades including the RAS-ERK, PI3 kinase-AKT, or PLCgamma-PKC. The RAS-ERK activation is associated with the morphogenetic effects while PI3K/AKT coordinates prosurvival effects. During embryonic development, MET signaling plays a role in gastrulation, development and migration of neuronal precursors, angiogenesis and kidney formation. During skeletal muscle development, it is crucial for the migration of muscle progenitor cells and for the proliferation of secondary myoblasts. In adults, participates in wound healing as well as organ regeneration and tissue remodeling. Also promotes differentiation and proliferation of hematopoietic cells. May regulate cortical bone osteogenesis. In terms of biological role, (Microbial infection) Acts as a receptor for Listeria monocytogenes internalin InlB, mediating entry of the pathogen into cells. This Homo sapiens (Human) protein is Hepatocyte growth factor receptor (MET).